Consider the following 257-residue polypeptide: NH(3)-dependent NAD(+) synthetase (257 aa).

Residue 40-47 (GISGGIDS) coordinates ATP. Asp46 lines the Mg(2+) pocket. Arg121 contacts deamido-NAD(+). Position 141 (Thr141) interacts with ATP. Glu146 serves as a coordination point for Mg(2+). Deamido-NAD(+) contacts are provided by Lys154 and Asp161. ATP-binding residues include Lys170 and Ser192. Residue 238-239 (HK) coordinates deamido-NAD(+).

It belongs to the NAD synthetase family. As to quaternary structure, homodimer.

The enzyme catalyses deamido-NAD(+) + NH4(+) + ATP = AMP + diphosphate + NAD(+) + H(+). The protein operates within cofactor biosynthesis; NAD(+) biosynthesis; NAD(+) from deamido-NAD(+) (ammonia route): step 1/1. Catalyzes the ATP-dependent amidation of deamido-NAD to form NAD. Uses ammonia as a nitrogen source. The chain is NH(3)-dependent NAD(+) synthetase from Mycoplasmopsis pulmonis (strain UAB CTIP) (Mycoplasma pulmonis).